We begin with the raw amino-acid sequence, 160 residues long: Flavodoxin (160 aa).

Residues 3–153 form the Flavodoxin-like domain; it reads ISILYSSKTG…NARIFGERIA (151 aa).

Belongs to the flavodoxin family. The cofactor is FMN.

Low-potential electron donor to a number of redox enzymes. The polypeptide is Flavodoxin (floX) (Clostridium saccharobutylicum).